A 379-amino-acid polypeptide reads, in one-letter code: MRVLLTSLPGIGHLFPMVPLGWALQAAGHTVLVATDREFLPVVTGAGLSATAVLDPVDPVELFKPVEPFGDPLSPAERTGHRCAEAGVRALPAMRALVDVWHPDLVIAEPMELAGPAAATNAGVPWVRHSYGLIPPGPLLSVAAEVLDAELAVLGLSALAKPARTIDVCPDSLRPSDGVATVPMRYVPYNGPAGVPDWLLAGPPARPRVCLTLGTSLPRRDPHVAPLWRLLLDELVALGQEVVIAIDESHRPLLGHLPDGVRAARIPLCDLLPTCTAIVHHGGSGSTMAAASFGVPQLVVPHFADHFTNAERLTAVGAGLSLPHDTDDLARISAACELITGDGPHRAISRRLADENARRPTPAVVAEGLAAEQRSMTPA.

This sequence belongs to the glycosyltransferase 28 family.

It catalyses the reaction dTDP-4-O-demethyl-beta-L-noviose + novobiocic acid = desmethyldescarbamoylnovobiocin + dTDP + H(+). The protein operates within antibiotic biosynthesis; novobiocin biosynthesis. With respect to regulation, inhibited by TDP-L-rhamnose, the sugar donor that most closely structurally resembles the natural substrate dTDP-beta-L-noviose. Its function is as follows. Catalyzes the transfer of L-noviose from dTDP-4-O-demethyl-beta-L-noviose to the phenolic oxygen of novobiocic acid, creating the full ABC ring system in the novobiocin biosynthesis pathway. Novobiocin is an aminocoumarin family antibiotic that targets bacterial DNA gyrases. Also shows activity with variant coumarin aglycones, suggesting it may be a promiscuous catalyst for noviosylation of a range of planar scaffolds. Does not show activity with TDP-L-rhamnose. In Streptomyces niveus (Streptomyces spheroides), this protein is L-demethylnoviosyl transferase (novM).